Consider the following 552-residue polypeptide: Hyaluronan synthase 2 (552 aa).

Over 1–11 the chain is Cytoplasmic; the sequence is MHCERFLCVLR. The chain crosses the membrane as a helical span at residues 12–32; sequence IIGTTLFGVSLLLGITAAYIV. Topologically, residues 33-45 are extracellular; sequence GYQFIQTDNYYFS. Residues 46 to 66 traverse the membrane as a helical segment; sequence FGLYGAFLASHLIIQSLFAFL. Topologically, residues 67–374 are cytoplasmic; sequence EHRKMKKSLE…NAMWFHKHHL (308 aa). T110 carries the post-translational modification Phosphothreonine. K190 participates in a covalent cross-link: Glycyl lysine isopeptide (Lys-Gly) (interchain with G-Cter in ubiquitin). S221 is a glycosylation site (O-linked (GlcNAc) serine). A Phosphothreonine modification is found at T328. The helical transmembrane segment at 375–395 threads the bilayer; the sequence is WMTYEAVITGFFPFFLIATVI. Residues 396-402 lie on the Extracellular side of the membrane; that stretch reads QLFYRGK. Residues 403–423 traverse the membrane as a helical segment; sequence IWNILLFLLTVQLVGLIKSSF. At 424–429 the chain is on the cytoplasmic side; the sequence is ASCLRG. Residues 430–450 form a helical membrane-spanning segment; that stretch reads NIVMVFMSLYSVLYMSSLLPA. Residues 451–475 are Extracellular-facing; the sequence is KMFAIATINKAGWGTSGRKTIVVNF. Residues 476–496 form a helical membrane-spanning segment; the sequence is IGLIPVSVWFTILLGGVIFTI. At 497–510 the chain is on the cytoplasmic side; that stretch reads YKESKKPFSESKQT. A helical membrane pass occupies residues 511–531; sequence VLIVGTLIYACYWVVLLTLYV. Over 532 to 552 the chain is Extracellular; that stretch reads VLINKCGRRKKGQQYDMVLDV.

Belongs to the NodC/HAS family. In terms of assembly, homodimer; dimerization promotes enzymatic activity. Forms heterodimer with HAS3. Forms heterodimer with HAS1. Mg(2+) is required as a cofactor. Post-translationally, phosphorylation at Thr-328 is essential for hyaluronan synthase activity. O-GlcNAcylation at Ser-221 increases the stability of HAS2 and plasma membrane localization. In terms of processing, ubiquitination at Lys-190; this ubiquitination is essential for hyaluronan synthase activity and homo- or hetero-oligomerization. Can also be poly-ubiquitinated. Deubiquitinated by USP17L22/USP17 and USP4. USP17L22/USP17 efficiently removes 'Lys-63'- and 'Lys-48'-linked polyubiquitin chains, whereas USP4 preferentially removes monoubiquitination and, partially, both 'Lys-63'- and 'Lys-48'-linked polyubiquitin chain.

The protein resides in the cell membrane. It localises to the endoplasmic reticulum membrane. It is found in the vesicle. The protein localises to the golgi apparatus membrane. Its subcellular location is the lysosome. The catalysed reaction is [hyaluronan](n) + UDP-N-acetyl-alpha-D-glucosamine = N-acetyl-beta-D-glucosaminyl-(1-&gt;4)-[hyaluronan](n) + UDP + H(+). The enzyme catalyses N-acetyl-beta-D-glucosaminyl-(1-&gt;4)-[hyaluronan](n) + UDP-alpha-D-glucuronate = [hyaluronan](n+1) + UDP + H(+). It participates in glycan biosynthesis; hyaluronan biosynthesis. Functionally, catalyzes the addition of GlcNAc or GlcUA monosaccharides to the nascent hyaluronan polymer. Therefore, it is essential to hyaluronan synthesis a major component of most extracellular matrices that has a structural role in tissues architectures and regulates cell adhesion, migration and differentiation. This is one of three isoenzymes responsible for cellular hyaluronan synthesis and it is particularly responsible for the synthesis of high molecular mass hyaluronan. This is Hyaluronan synthase 2 (Has2) from Rattus norvegicus (Rat).